Reading from the N-terminus, the 76-residue chain is MKLTCVVIVAVLFLTACQLITADDSRSTQRHRALRSTTKLSMSTRCKPPGSKCSPSMRDCCTTCISYTKRCRKYYN.

A signal peptide spans 1–22 (MKLTCVVIVAVLFLTACQLITA). The propeptide occupies 23–45 (DDSRSTQRHRALRSTTKLSMSTR). Disulfide bonds link Cys46/Cys61, Cys53/Cys64, and Cys60/Cys71. A hydroxyproline mark is found at Pro49 and Pro55.

Belongs to the conotoxin O1 superfamily. Expressed by the venom duct.

The protein localises to the secreted. Its function is as follows. Omega-conotoxins act at presynaptic membranes, they bind and block voltage-gated calcium channels (Cav). This toxin potently blocks mammalian N-type calcium channels (Cav2.2/CACNA1B) (IC(50)=330 nM on human channels). It is 9-fold more potent in displacing radiolabeled omega-conotoxin GVIA from fish brain membranes than from human SH-SY5Y cells. In terms of biological role, omega-conotoxins act at presynaptic membranes, they bind and block voltage-gated calcium channels (Cav). This toxin potently blocks mammalian N-type calcium channels (Cav2.2/CACNA1B) (IC(50)=600 nM on human channels). It is 60-fold more potent in displacing radiolabeled omega-conotoxin GVIA from fish brain membranes than from human SH-SY5Y cells. In vivo, when tested on rat neuropathic pain model, this toxin shows an analgesic activity. In Conus moncuri (Sea snail), this protein is Omega-conotoxin MoVIA.